A 343-amino-acid chain; its full sequence is MFGGAKGGHFGVPPAGYSGAVPQSEAGTKAGPAGGRPADTMWRVRCKAKGGTHLLQGLSSRTRLRELQGQIAAITGIAPGSQRILVGYPPECLDLSDRDITLGDLPIQSGDMLIVEEDQTRPKASPAFSKYGAPSYVREALPVLTRTAVPADNSCLFTSVYYVVEGGVLNPACAPEMRRLIAQIVASDPVLYSEAILGKTNEDYCDWIRRDDTWGGAIEISILSKFYQCEICVVDTQTVRIDRFGEDAGYTKRVLLIYDGIHYDPLQRNFPDPDTPPLTIFSSNDDIVLVQALELADEARRKRQFTDVNRFTLRCMICQKGLTGQAEARDHARETGHTNFGEV.

Residues 45–123 are UBX-like; it reads RCKAKGGTHL…IVEEDQTRPK (79 aa). The 126-residue stretch at 144–269 folds into the OTU domain; it reads LTRTAVPADN…GIHYDPLQRN (126 aa). The cys-loop stretch occupies residues 149 to 155; that stretch reads VPADNSC. Residue Asp152 is part of the active site. The active-site Nucleophile is the Cys155. The tract at residues 208-218 is variable-loop; it reads IRRDDTWGGAI. A his-loop region spans residues 258–262; that stretch reads YDGIH. Ile261 contacts substrate. The active site involves His262. An S2 site region spans residues 286–291; it reads DIVLVQ. The C2H2-type zinc-finger motif lies at 313–337; it reads LRCMICQKGLTGQAEARDHARETGH. The active site involves His337.

In terms of assembly, interacts with VCP; the interaction is direct. Interacts with FAF2/UBXD8. Interacts with DERL1; however interaction is dependent on the UBAX-like region, suggesting that it may be indirect. Interacts with PLAA, UBXN6 and VCP; may form a complex involved in macroautophagy.

It localises to the cytoplasm. The enzyme catalyses Thiol-dependent hydrolysis of ester, thioester, amide, peptide and isopeptide bonds formed by the C-terminal Gly of ubiquitin (a 76-residue protein attached to proteins as an intracellular targeting signal).. Its function is as follows. Hydrolase that can remove conjugated ubiquitin from proteins and participates in endoplasmic reticulum-associated degradation (ERAD) for misfolded lumenal proteins. May act by triming the ubiquitin chain on the associated substrate to facilitate their threading through the VCP/p97 pore. Ubiquitin moieties on substrates may present a steric impediment to the threading process when the substrate is transferred to the VCP pore and threaded through VCP's axial channel. Mediates deubiquitination of 'Lys-27'-, 'Lys-29'- and 'Lys-33'-linked polyubiquitin chains. Also able to hydrolyze 'Lys-11'-linked ubiquitin chains. Cleaves both polyubiquitin and di-ubiquitin. May play a role in macroautophagy, regulating for instance the clearance of damaged lysosomes. May recruit PLAA, UBXN6 and VCP to damaged lysosome membranes decorated with K48-linked ubiquitin chains and remove these chains allowing autophagosome formation. The polypeptide is Ubiquitin thioesterase OTU1 (Yod1) (Mus musculus (Mouse)).